Consider the following 1128-residue polypeptide: Phytochrome A (1128 aa).

The span at 1-21 (MSSSRPTQCSSSSSRTRQSSR) shows a compositional bias: low complexity. Positions 1–24 (MSSSRPTQCSSSSSRTRQSSRARI) are disordered. Residues 219 to 404 (SMEVLCNTVV…VFAVHVNKEF (186 aa)) enclose the GAF domain. Cysteine 324 contributes to the phytochromobilin binding site. 2 consecutive PAS domains span residues 620 to 690 (VTSE…LQGK) and 750 to 834 (VEGD…LAGD). One can recognise a Histidine kinase domain in the interval 904–1124 (YMRHAINNPL…TFILSVELAS (221 aa)).

The protein belongs to the phytochrome family. Homodimer. Contains one covalently linked phytochromobilin chromophore.

In terms of biological role, regulatory photoreceptor which exists in two forms that are reversibly interconvertible by light: the Pr form that absorbs maximally in the red region of the spectrum and the Pfr form that absorbs maximally in the far-red region. Photoconversion of Pr to Pfr induces an array of morphogenic responses, whereas reconversion of Pfr to Pr cancels the induction of those responses. Pfr controls the expression of a number of nuclear genes including those encoding the small subunit of ribulose-bisphosphate carboxylase, chlorophyll A/B binding protein, protochlorophyllide reductase, rRNA, etc. It also controls the expression of its own gene(s) in a negative feedback fashion. The sequence is that of Phytochrome A (PHYA) from Oryza sativa subsp. indica (Rice).